Here is a 91-residue protein sequence, read N- to C-terminus: Heat shock protein 30E (91 aa).

A disordered region spans residues 62 to 91 (RDQIRQPGAPESEGTSPNTGKDGKDPGNSL). The segment covering 82–91 (KDGKDPGNSL) has biased composition (basic and acidic residues).

This sequence belongs to the small heat shock protein (HSP20) family.

This is Heat shock protein 30E (hsp30e) from Xenopus laevis (African clawed frog).